Reading from the N-terminus, the 455-residue chain is Virion host shutoff protein (455 aa).

This sequence belongs to the herpesviridae VHS protein family.

The protein resides in the virion. In terms of biological role, minor structural protein that acts as an endoribonuclease during lytic infection. Degrades host mRNAs in the cytoplasm by cutting them at preferred sites, including some in regions of translation initiation. The protein is Virion host shutoff protein (17) of Homo sapiens (Human).